We begin with the raw amino-acid sequence, 275 residues long: Tryptophan synthase alpha chain (275 aa).

Active-site proton acceptor residues include glutamate 49 and aspartate 60.

Belongs to the TrpA family. Tetramer of two alpha and two beta chains.

It catalyses the reaction (1S,2R)-1-C-(indol-3-yl)glycerol 3-phosphate + L-serine = D-glyceraldehyde 3-phosphate + L-tryptophan + H2O. The protein operates within amino-acid biosynthesis; L-tryptophan biosynthesis; L-tryptophan from chorismate: step 5/5. In terms of biological role, the alpha subunit is responsible for the aldol cleavage of indoleglycerol phosphate to indole and glyceraldehyde 3-phosphate. The polypeptide is Tryptophan synthase alpha chain (Nitrosomonas europaea (strain ATCC 19718 / CIP 103999 / KCTC 2705 / NBRC 14298)).